The chain runs to 486 residues: Serine/threonine-protein kinase 33 (486 aa).

The segment at 39–100 (VVEMSQTSST…WGRGNFTEGK (62 aa)) is disordered. Positions 41–53 (EMSQTSSTGSSEF) are enriched in polar residues. A compositionally biased stretch (basic and acidic residues) spans 57–66 (PEKRKEKGAS). Residues 68–80 (DVTSGKDSPSKSS) show a composition bias toward polar residues. Residues 116-381 (YTFGRILGQG…AKELLDNQWL (266 aa)) form the Protein kinase domain. Residues 122 to 130 (LGQGSFGMV) and Lys-145 each bind ATP. Asp-238 acts as the Proton acceptor in catalysis. The disordered stretch occupies residues 402–451 (KNNPESDEESTTDQRDSRSGQEESKVYQPSRNVPDVSNSSDEEEGKQVGR). A Phosphoserine modification is found at Ser-407. A compositionally biased stretch (basic and acidic residues) spans 413–426 (TDQRDSRSGQEESK). The span at 428–440 (YQPSRNVPDVSNS) shows a compositional bias: polar residues.

Belongs to the protein kinase superfamily. CAMK Ser/Thr protein kinase family. CaMK subfamily. As to quaternary structure, interacts with vimentin/VIM. In terms of processing, autophosphorylated.

The protein localises to the cytoplasm. It localises to the perinuclear region. It catalyses the reaction L-seryl-[protein] + ATP = O-phospho-L-seryl-[protein] + ADP + H(+). The enzyme catalyses L-threonyl-[protein] + ATP = O-phospho-L-threonyl-[protein] + ADP + H(+). In terms of biological role, serine/threonine protein kinase which phosphorylates vimentin/VIM. Therefore may play a specific role in the dynamic behavior of the intermediate filament cytoskeleton. This chain is Serine/threonine-protein kinase 33 (STK33), found in Bos taurus (Bovine).